The sequence spans 412 residues: Gamma-glutamyl phosphate reductase (412 aa).

It belongs to the gamma-glutamyl phosphate reductase family.

It localises to the cytoplasm. It carries out the reaction L-glutamate 5-semialdehyde + phosphate + NADP(+) = L-glutamyl 5-phosphate + NADPH + H(+). The protein operates within amino-acid biosynthesis; L-proline biosynthesis; L-glutamate 5-semialdehyde from L-glutamate: step 2/2. Its function is as follows. Catalyzes the NADPH-dependent reduction of L-glutamate 5-phosphate into L-glutamate 5-semialdehyde and phosphate. The product spontaneously undergoes cyclization to form 1-pyrroline-5-carboxylate. This is Gamma-glutamyl phosphate reductase from Aliarcobacter butzleri (strain RM4018) (Arcobacter butzleri).